The following is a 328-amino-acid chain: Naphthalene 1,2-dioxygenase system ferredoxin--NAD(P)(+), reductase component (328 aa).

One can recognise a 2Fe-2S ferredoxin-type domain in the interval 1–89 (MELLIQPNNR…NCAIEVPEAD (89 aa)). Residues Cys35, Cys40, Cys43, and Cys73 each coordinate [2Fe-2S] cluster. The 98-residue stretch at 96–193 (ARIIKGTVVA…SGPLGTAYLR (98 aa)) folds into the FAD-binding FR-type domain.

This sequence belongs to the bacterial ring-hydroxylating dioxygenase ferredoxin reductase component family. The naphthalene dioxygenase (NDO) multicomponent enzyme system is composed of an electron transfer component and a dioxygenase component (iron sulfur protein (ISP)). The electron transfer component is composed of a ferredoxin reductase (NdoR) and a ferredoxin (NdoA), and the dioxygenase component is formed of a heterohexamer (trimer of heterodimers) of three large alpha subunits (NdoB) and three small beta subunits (NdoC). Requires [2Fe-2S] cluster as cofactor. FAD is required as a cofactor.

The enzyme catalyses 2 reduced [2Fe-2S]-[ferredoxin] + NAD(+) + H(+) = 2 oxidized [2Fe-2S]-[ferredoxin] + NADH. The catalysed reaction is 2 reduced [2Fe-2S]-[ferredoxin] + NADP(+) + H(+) = 2 oxidized [2Fe-2S]-[ferredoxin] + NADPH. Its pathway is aromatic compound metabolism; naphthalene degradation. With respect to regulation, strongly inhibited by p-chloromercuribenzoate. Also inhibited by N-ethylmaleimide and o-phenanthroline. Functionally, component of the naphthalene dioxygenase (NDO) multicomponent enzyme system which catalyzes the incorporation of both atoms of molecular oxygen into naphthalene to form cis-(1R,2S)-dihydroxy-1,2-dihydronaphthalene. Ferredoxin reductase catalyzes the transfer of electrons from NADH to ferredoxin (NdoA). NADPH is also effective but yields only 39% of the activity obtained with NADH. Also able to catalyze the cis-dihydroxylation of biphenyl and phenanthrene. In Pseudomonas putida (Arthrobacter siderocapsulatus), this protein is Naphthalene 1,2-dioxygenase system ferredoxin--NAD(P)(+), reductase component (ndoR).